Consider the following 208-residue polypeptide: Ciliary-associated calcium-binding coiled-coil protein 1 (208 aa).

In terms of tissue distribution, testis-specific. Expressed in spermatocytes and round spermatids (at protein level).

The protein localises to the cytoplasm. The protein resides in the cytoskeleton. Its subcellular location is the microtubule organizing center. It localises to the centrosome. It is found in the cell projection. The protein localises to the cilium. The protein resides in the flagellum. In terms of biological role, calcium-binding protein. May be involved in the control of sperm flagellar movement. The chain is Ciliary-associated calcium-binding coiled-coil protein 1 from Mus musculus (Mouse).